A 293-amino-acid chain; its full sequence is MSLRQIAFYGKGGIGKSTTSQNTLAALVELDQKILIVGCDPKADSTRLILHAKAQDTVLHLAAEAGSVEDLELEDVLKIGYKGIKCVESGGPEPGVGCAGRGVITSINFLEENGAYDDVDYVSYDVLGDVVCGGFAMPIRENKAQEIYIVMSGEMMALYAANNIAKGILKYAHSGGVRLGGLICNERQTDKEIDLASALAARLGTQLIHFVPRDNIVQHAELRRMTVIEYAPDSQQAQEYRQLANKVHANKGKGTIPTPITMEELEEMLMDFGIMKSEEQQLAELQAKEAAKA.

10–17 (GKGGIGKS) lines the ATP pocket. A [4Fe-4S] cluster-binding site is contributed by C98. An ADP-ribosylarginine; by dinitrogenase reductase ADP-ribosyltransferase modification is found at R101. [4Fe-4S] cluster is bound at residue C132.

The protein belongs to the NifH/BchL/ChlL family. In terms of assembly, homodimer. [4Fe-4S] cluster is required as a cofactor. The reversible ADP-ribosylation of Arg-101 inactivates the nitrogenase reductase and regulates nitrogenase activity.

The enzyme catalyses N2 + 8 reduced [2Fe-2S]-[ferredoxin] + 16 ATP + 16 H2O = H2 + 8 oxidized [2Fe-2S]-[ferredoxin] + 2 NH4(+) + 16 ADP + 16 phosphate + 6 H(+). In terms of biological role, the key enzymatic reactions in nitrogen fixation are catalyzed by the nitrogenase complex, which has 2 components: the iron protein and the molybdenum-iron protein. The sequence is that of Nitrogenase iron protein (nifH) from Azospirillum brasilense.